The following is a 159-amino-acid chain: Transcription elongation factor GreA (159 aa).

A coiled-coil region spans residues 1 to 76 (MAEEKEVVLT…SLEKTLKKAR (76 aa)).

This sequence belongs to the GreA/GreB family.

In terms of biological role, necessary for efficient RNA polymerase transcription elongation past template-encoded arresting sites. The arresting sites in DNA have the property of trapping a certain fraction of elongating RNA polymerases that pass through, resulting in locked ternary complexes. Cleavage of the nascent transcript by cleavage factors such as GreA or GreB allows the resumption of elongation from the new 3'terminus. GreA releases sequences of 2 to 3 nucleotides. The protein is Transcription elongation factor GreA of Syntrophomonas wolfei subsp. wolfei (strain DSM 2245B / Goettingen).